We begin with the raw amino-acid sequence, 55 residues long: ATP synthase protein 8 (55 aa).

The helical transmembrane segment at 4-24 threads the bilayer; the sequence is LDPAPWFSMLTVSWLIIFLLI.

This sequence belongs to the ATPase protein 8 family. As to quaternary structure, F-type ATPases have 2 components, CF(1) - the catalytic core - and CF(0) - the membrane proton channel.

It is found in the mitochondrion membrane. Its function is as follows. Mitochondrial membrane ATP synthase (F(1)F(0) ATP synthase or Complex V) produces ATP from ADP in the presence of a proton gradient across the membrane which is generated by electron transport complexes of the respiratory chain. F-type ATPases consist of two structural domains, F(1) - containing the extramembraneous catalytic core and F(0) - containing the membrane proton channel, linked together by a central stalk and a peripheral stalk. During catalysis, ATP synthesis in the catalytic domain of F(1) is coupled via a rotary mechanism of the central stalk subunits to proton translocation. Part of the complex F(0) domain. Minor subunit located with subunit a in the membrane. This Petromyzon marinus (Sea lamprey) protein is ATP synthase protein 8 (MT-ATP8).